We begin with the raw amino-acid sequence, 262 residues long: Inner membrane protein YcfZ (262 aa).

At 1 to 4 (MKKF) the chain is on the cytoplasmic side. The chain crosses the membrane as a helical span at residues 5 to 27 (IILLSLLILLPLTAASKPLIPIM). At 28-182 (KTLFTDVTGT…HENAPPGSTN (155 aa)) the chain is on the periplasmic side. A helical membrane pass occupies residues 183-202 (TLGFIAWAATFILFSRIFYY). At 203–206 (TTRF) the chain is on the cytoplasmic side. A helical transmembrane segment spans residues 207-229 (IYALKFAVAMTIANMGYQALCLY). Topologically, residues 230-238 (IDNSFAITR) are periplasmic. The chain crosses the membrane as a helical span at residues 239–258 (ISPLWAGLIGVCTFIAALLL). Residues 259 to 262 (TSKR) are Cytoplasmic-facing.

It is found in the cell inner membrane. The polypeptide is Inner membrane protein YcfZ (ycfZ) (Escherichia coli (strain K12)).